Consider the following 510-residue polypeptide: uncharacterized protein (510 aa).

Residues 1–19 (MLILLILYFLFLQLHIFDS) form the signal peptide. A helical membrane pass occupies residues 28–48 (IYIHYAICKFIFLLEIYKLIA).

It localises to the host membrane. This is an uncharacterized protein from Sulfolobus islandicus rod-shaped virus 1 (SIRV-1).